The following is a 218-amino-acid chain: Protein P9 (218 aa).

The protein resides in the virion membrane. This is Protein P9 (IX) from Pseudoalteromonas espejiana (Bacteriophage PM2).